The primary structure comprises 519 residues: Light-independent protochlorophyllide reductase subunit B (519 aa).

D36 is a [4Fe-4S] cluster binding site. Catalysis depends on D274, which acts as the Proton donor. 409-410 (GL) contacts substrate. Positions 426–465 (DEAGPSHHGGHSPKPSEAARTPDKVEERADPAPEAPQTGS) are disordered. Basic and acidic residues predominate over residues 445-456 (RTPDKVEERADP).

The protein belongs to the ChlB/BchB/BchZ family. Protochlorophyllide reductase is composed of three subunits; BchL, BchN and BchB. Forms a heterotetramer of two BchB and two BchN subunits. It depends on [4Fe-4S] cluster as a cofactor.

It carries out the reaction chlorophyllide a + oxidized 2[4Fe-4S]-[ferredoxin] + 2 ADP + 2 phosphate = protochlorophyllide a + reduced 2[4Fe-4S]-[ferredoxin] + 2 ATP + 2 H2O. Its pathway is porphyrin-containing compound metabolism; bacteriochlorophyll biosynthesis (light-independent). Functionally, component of the dark-operative protochlorophyllide reductase (DPOR) that uses Mg-ATP and reduced ferredoxin to reduce ring D of protochlorophyllide (Pchlide) to form chlorophyllide a (Chlide). This reaction is light-independent. The NB-protein (BchN-BchB) is the catalytic component of the complex. The polypeptide is Light-independent protochlorophyllide reductase subunit B (Jannaschia sp. (strain CCS1)).